Reading from the N-terminus, the 51-residue chain is Probable antitoxin PhoAT (51 aa).

It belongs to the PhoAT antitoxin family. In terms of assembly, interacts with toxin PhoH2.

Functionally, antitoxin component of a type II toxin-antitoxin (TA) system. The cognate antitoxin is PhoAT; the toxin gene cannot be expressed in the absence of the antitoxin gene in M.smegmatis (strain mc(2)4517), and abrogates the toxic effects of PhoH2 in M.smegmatis strain mc(2)155. In Mycobacterium tuberculosis (strain ATCC 25618 / H37Rv), this protein is Probable antitoxin PhoAT.